The sequence spans 189 residues: UPF0149 protein VSAL_I2539 (189 aa).

This sequence belongs to the UPF0149 family.

This Aliivibrio salmonicida (strain LFI1238) (Vibrio salmonicida (strain LFI1238)) protein is UPF0149 protein VSAL_I2539.